Here is a 99-residue protein sequence, read N- to C-terminus: NADH-quinone oxidoreductase subunit K (99 aa).

A run of 3 helical transmembrane segments spans residues 2-22 (PVEYYLWLAAILFGIGLLGVL), 28-48 (LILMMSVELMLNAANLTFLAF), and 60-80 (IAFFVIAVAAAEAAVGLAVVI).

The protein belongs to the complex I subunit 4L family. As to quaternary structure, NDH-1 is composed of 14 different subunits. Subunits NuoA, H, J, K, L, M, N constitute the membrane sector of the complex.

It is found in the cell inner membrane. The enzyme catalyses a quinone + NADH + 5 H(+)(in) = a quinol + NAD(+) + 4 H(+)(out). NDH-1 shuttles electrons from NADH, via FMN and iron-sulfur (Fe-S) centers, to quinones in the respiratory chain. The immediate electron acceptor for the enzyme in this species is believed to be ubiquinone. Couples the redox reaction to proton translocation (for every two electrons transferred, four hydrogen ions are translocated across the cytoplasmic membrane), and thus conserves the redox energy in a proton gradient. This is NADH-quinone oxidoreductase subunit K from Anaeromyxobacter dehalogenans (strain 2CP-1 / ATCC BAA-258).